The following is a 138-amino-acid chain: Small ribosomal subunit protein uS11c (138 aa).

The disordered stretch occupies residues 1–22 (MAKSIPRISSRRNGRIGSGNNV).

This sequence belongs to the universal ribosomal protein uS11 family. In terms of assembly, part of the 30S ribosomal subunit.

It is found in the plastid. The protein is Small ribosomal subunit protein uS11c of Cuscuta reflexa (Southern Asian dodder).